Here is a 78-residue protein sequence, read N- to C-terminus: Small ribosomal subunit protein bS18 (78 aa).

Belongs to the bacterial ribosomal protein bS18 family. Part of the 30S ribosomal subunit. Forms a tight heterodimer with protein bS6.

Its function is as follows. Binds as a heterodimer with protein bS6 to the central domain of the 16S rRNA, where it helps stabilize the platform of the 30S subunit. The polypeptide is Small ribosomal subunit protein bS18 (Geobacillus sp. (strain WCH70)).